Reading from the N-terminus, the 353-residue chain is MDIFKELIVKHPDENVLISPVSILSTLSILNHGAAGSTAEQLSKYIENMNENTPDDNNDMDVDIPYCATLATANKIYGSDSIEFHASFLQKIKDDFQTVNFNNANQTKELINEWVKTMTNGKINSLLTSPLSINTRMTVVSAVHFKAMWKYPFSKHLTYTDKFYISKNIVTSVDMMVGTENNLQYVHINELFGGFSIIDIPYEGNSSMVIILPDDIEGIYNIEKNITDEKFKKWCGMLSTKSIDLYMPKFKVEMTEPYNLVPILENLGLTNIFGYYADFSKMCNETITVEKFLHTTFIDVNEEYTEASAVTGVFTINFSMVYRTKVYINHPFMYMIKDTTGRILFIGKYCYPQ.

It belongs to the serpin family. Poxviruses subfamily.

Its subcellular location is the host cytoplasm. Functionally, plays a role in mediating viral host range. May act to inhibit a caspase independent form of apoptosis to allow efficient virus replication in infected cells. The polypeptide is Serine proteinase inhibitor 1 (OPG208) (Vaccinia virus (strain Copenhagen) (VACV)).